A 314-amino-acid chain; its full sequence is Peroxidase 2 (314 aa).

A signal peptide spans 1–23 (MASASSVSLMLLVAAAMASAASA). Position 24 is a pyrrolidone carboxylic acid (Gln-24). Cystine bridges form between Cys-34-Cys-109, Cys-67-Cys-72, Cys-115-Cys-310, and Cys-194-Cys-219. His-65 serves as the catalytic Proton acceptor. Ca(2+)-binding residues include Asp-66, Val-69, Gly-71, Asp-73, and Ser-75. A glycan (N-linked (GlcNAc...) asparagine) is linked at Asn-148. Residue Pro-157 participates in substrate binding. Asn-169 is a glycosylation site (N-linked (GlcNAc...) asparagine). Position 187 (His-187) interacts with heme b. Thr-188 is a Ca(2+) binding site. N-linked (GlcNAc...) asparagine glycosylation is present at Asn-203. 3 residues coordinate Ca(2+): Asp-234, Thr-237, and Asp-242. N-linked (GlcNAc...) asparagine glycans are attached at residues Asn-274 and Asn-309.

Belongs to the peroxidase family. Classical plant (class III) peroxidase subfamily. Ca(2+) is required as a cofactor. Requires heme b as cofactor.

It localises to the secreted. It carries out the reaction 2 a phenolic donor + H2O2 = 2 a phenolic radical donor + 2 H2O. Functionally, removal of H(2)O(2), oxidation of toxic reductants, biosynthesis and degradation of lignin, suberization, auxin catabolism, response to environmental stresses such as wounding, pathogen attack and oxidative stress. These functions might be dependent on each isozyme/isoform in each plant tissue. In Oryza sativa subsp. japonica (Rice), this protein is Peroxidase 2 (PRX112).